The sequence spans 520 residues: MRFSNAFVLVAACISSVLADTKTFNFDLVNTRLAPDGFERDTVVINGEFPGTLVQVNKGDSVRIPVNNKLTSSTMRRSVSIHWHGFFQARTSGQDGPAFVNQCPQPPNTTFTYEFSVADESGTFWYHSHLSTQYCDGLRGAFVVYDPEDPLGHLYDVDDETTVITLAEWYHVLAPDINNEFFSSGIIPVQDSGLINGKGRFNGGPETPFAVVNVEQGKRYRFRVIAISCRPFFTFSVDNHNLTFMEADSVEHDPVEIQNVDIYAAQRVSVILNANQPVDNYWMRAPMTGGNPDRNPNLNISLTLAILRYKGAPEVEPTTVNVPGHKLLDQEMHPIAQEGPGKLGDGPPDKHITLNIAQPNAPFFDINGISYISPTVPVLLQILSGAKRPEDVLPSEQIFFVPKNSLIEVNIPGEGAHPFHLHGHNFDVVLASNDDTFNFVNPPRRDVYPINGGNTTFRFFTDNPGAWFLHCHIDWHLEAGLAIVFAEAPEDNVSGPQSQITPQDWLDLCPEYNAIEPEFQ.

A signal peptide spans 1-19 (MRFSNAFVLVAACISSVLA). Plastocyanin-like domains follow at residues 21–145 (TKTF…FVVY), 157–305 (VDDE…LTLA), and 375–488 (TVPV…FAEA). Cu cation contacts are provided by His82 and His84. Disulfide bonds link Cys103-Cys509 and Cys135-Cys229. N-linked (GlcNAc...) asparagine glycosylation is present at Asn108. 2 residues coordinate Cu cation: His127 and His129. N-linked (GlcNAc...) asparagine glycans are attached at residues Asn241 and Asn299. Cu cation-binding residues include His417, His420, His422, His470, Cys471, His472, and His476. An N-linked (GlcNAc...) asparagine glycan is attached at Asn492.

It belongs to the multicopper oxidase family. Requires Cu cation as cofactor.

The protein localises to the secreted. The catalysed reaction is 4 hydroquinone + O2 = 4 benzosemiquinone + 2 H2O. Lignin degradation and detoxification of lignin-derived products. This Agaricus bisporus (White button mushroom) protein is Laccase-2 (lcc2).